Here is a 109-residue protein sequence, read N- to C-terminus: Iron-sulfur cluster assembly protein CyaY (109 aa).

This sequence belongs to the frataxin family.

Functionally, involved in iron-sulfur (Fe-S) cluster assembly. May act as a regulator of Fe-S biogenesis. The chain is Iron-sulfur cluster assembly protein CyaY from Shewanella sp. (strain ANA-3).